A 173-amino-acid chain; its full sequence is Alpha-crystallin A chain (173 aa).

Met1 is subject to N-acetylmethionine. Residues Met1 to Glu63 are required for complex formation with BFSP1 and BFSP2. Deamidated glutamine; partial is present on Gln6. Position 45 is a phosphoserine (Ser45). Gln50 is subject to Deamidated glutamine; partial. The sHSP domain occupies Leu52 to Ser162. Lys70 carries the post-translational modification N6-acetyllysine. Gln90 carries the deamidated glutamine; partial modification. N6-acetyllysine is present on Lys99. His100 serves as a coordination point for Zn(2+). Deamidated asparagine; partial is present on Asn101. Zn(2+) is bound by residues Glu102 and His107. Position 122 is a phosphoserine (Ser122). The residue at position 123 (Asn123) is a Deamidated asparagine; partial. The tract at residues Pro144–Ser173 is disordered. Basic and acidic residues predominate over residues Gly153–Pro167. Residue His154 coordinates Zn(2+). The O-linked (GlcNAc) serine glycan is linked to Ser162.

Belongs to the small heat shock protein (HSP20) family. In terms of assembly, heteromer composed of three CRYAA and one CRYAB subunits. Inter-subunit bridging via zinc ions enhances stability, which is crucial as there is no protein turn over in the lens. Can also form homodimers and homotetramers (dimers of dimers) which serve as the building blocks of homooligomers. Within homooligomers, the zinc-binding motif is created from residues of 3 different molecules. His-100 and Glu-102 from one molecule are ligands of the zinc ion, and His-107 and His-154 residues from additional molecules complete the site with tetrahedral coordination geometry. Part of a complex required for lens intermediate filament formation composed of BFSP1, BFSP2 and CRYAA. Post-translationally, acetylation at Lys-70 may increase chaperone activity. Undergoes age-dependent proteolytical cleavage at the C-terminus.

It localises to the cytoplasm. Its subcellular location is the nucleus. Contributes to the transparency and refractive index of the lens. Acts as a chaperone, preventing aggregation of various proteins under a wide range of stress conditions. Required for the correct formation of lens intermediate filaments as part of a complex composed of BFSP1, BFSP2 and CRYAA. The chain is Alpha-crystallin A chain (CRYAA) from Equus caballus (Horse).